A 505-amino-acid polypeptide reads, in one-letter code: Retinoic acid receptor gamma (505 aa).

2 disordered regions span residues 1–57 (MMKF…SSKD) and 113–134 (SLSV…PSPP). 2 stretches are compositionally biased toward basic and acidic residues: residues 12 to 22 (DGGERPEEEGK) and 32 to 46 (MGKE…KEEA). Residues 52–142 (MSSSKDRICS…PPPPPRVYKP (91 aa)) are modulating. Positions 115-124 (SVETQSTSSE) are enriched in polar residues. 2 NR C4-type zinc fingers span residues 143 to 163 (CFVC…CEGC) and 179 to 203 (CHRD…LQKC). The nuclear receptor DNA-binding region spans 143 to 208 (CFVCNDKSSG…RLQKCFEVGM (66 aa)). The tract at residues 209-237 (SKEAVRNDRNKKKKEIKEEVVTDSYEMPP) is hinge. Residues 238–472 (EMEALIQKVS…PLIREMLENP (235 aa)) form the NR LBD domain. Positions 462 to 505 (PPLIREMLENPEAFEDDASPPPKSEQKPIKVEEKPGEKTSTKDP) are disordered. The segment covering 485–505 (SEQKPIKVEEKPGEKTSTKDP) has biased composition (basic and acidic residues).

Belongs to the nuclear hormone receptor family. NR1 subfamily. Heterodimer; with a RXR molecule. Binds DNA preferentially as a RAR/RXR heterodimer. As to expression, isoform Delta-1A and Isoform Delta-1B are most abundant in regenerating limbs, tails, and the anterior half of the lower jaw. Isoform Delta-2 is broadly and uniformly distributed.

The protein resides in the nucleus. Functionally, receptor for retinoic acid. Retinoic acid receptors bind as heterodimers to their target response elements in response to their ligands, all-trans or 9-cis retinoic acid, and regulate gene expression in various biological processes. The RAR/RXR heterodimers bind to the retinoic acid response elements (RARE) composed of tandem 5'-AGGTCA-3' sites known as DR1-DR5. In Notophthalmus viridescens (Eastern newt), this protein is Retinoic acid receptor gamma (RARG).